An 892-amino-acid polypeptide reads, in one-letter code: UPF0182 protein Gura_0902 (892 aa).

Helical transmembrane passes span 6 to 26, 50 to 70, 103 to 123, 158 to 178, 201 to 221, 248 to 268, and 271 to 291; these read FIII…LINF, VGAG…NLHF, LGIL…AMQW, MLKI…GAVY, LAVL…LNGC, ILTV…WQGA, and LALL…KAYP.

This sequence belongs to the UPF0182 family.

The protein localises to the cell membrane. This Geotalea uraniireducens (strain Rf4) (Geobacter uraniireducens) protein is UPF0182 protein Gura_0902.